The primary structure comprises 950 residues: Coiled-coil domain-containing protein 80 (950 aa).

The signal sequence occupies residues 1–21; the sequence is MTWRMGPRFTMLLAMWLVCGS. Disordered stretches follow at residues 28–64, 88–119, and 289–609; these read TIRG…IERS, PTEP…EMIR, and QVVA…QSPK. 2 stretches are compositionally biased toward basic and acidic residues: residues 104-119 and 308-317; these read PEQR…EMIR and SEKKKEDPRR. Low complexity predominate over residues 348–374; that stretch reads PRATTLPPAPATTVTRSTSRAVTVAAR. A compositionally biased stretch (polar residues) spans 376 to 385; that stretch reads MTTTAFPTTQ. The span at 418–428 shows a compositional bias: basic and acidic residues; sequence SRKDQHRERPQ. Positions 435–454 are enriched in polar residues; it reads KATSLESFTNAPPTTISEPS. Basic and acidic residues-rich tracts occupy residues 462-478, 487-499, and 538-582; these read RFRD…HRDP, PAKE…KAQD, and KKHE…EKEK. Glycyl lysine isopeptide (Lys-Gly) (interchain with G-Cter in SUMO2) cross-links involve residues Lys-545 and Lys-548. Residues 560–587 are a coiled coil; that stretch reads DKLLKSEKQMKKSEKKSKQEKEKSKKKK. A compositionally biased stretch (polar residues) spans 598–609; sequence KPTNKHFTQSPK.

It belongs to the CCDC80 family. Binds to various extracellular matrix proteins. Phosphorylated. As to expression, expressed in dermal papilla and dermal fibroblasts (at protein level). Expressed in heart, thymus, placenta, pancreas, colon, epithelium, spleen and osteoblasts.

The protein localises to the secreted. It localises to the extracellular space. The protein resides in the extracellular matrix. Its function is as follows. Promotes cell adhesion and matrix assembly. The protein is Coiled-coil domain-containing protein 80 (CCDC80) of Homo sapiens (Human).